We begin with the raw amino-acid sequence, 800 residues long: Putative antiporter subunit mnhA2 (800 aa).

20 helical membrane passes run Met-1 to Ser-21, Ile-33 to Ala-53, Gly-78 to Ala-98, Leu-118 to Phe-138, Phe-167 to Met-187, Gly-207 to Phe-227, Thr-241 to Leu-261, Tyr-273 to Leu-293, Gly-300 to Gly-320, Ile-331 to Ile-351, Leu-387 to Ser-407, Phe-424 to Phe-444, Pro-472 to Val-492, Gly-527 to Ile-547, Ile-595 to Leu-615, Gly-627 to Ile-647, Leu-651 to Met-671, Leu-676 to Ser-696, Ile-712 to Thr-732, and Leu-768 to Leu-788.

It belongs to the CPA3 antiporters (TC 2.A.63) subunit A family. In terms of assembly, may form a heterooligomeric complex that consists of seven subunits: mnhA2, mnhB2, mnhC2, mnhD2, mnhE2, mnhF2 and mnhG2.

The protein localises to the cell membrane. In Staphylococcus aureus (strain USA300), this protein is Putative antiporter subunit mnhA2 (mnhA2).